A 150-amino-acid polypeptide reads, in one-letter code: Ribosome maturation factor RimP (150 aa).

It belongs to the RimP family.

Its subcellular location is the cytoplasm. Required for maturation of 30S ribosomal subunits. In Escherichia coli O9:H4 (strain HS), this protein is Ribosome maturation factor RimP.